Here is a 242-residue protein sequence, read N- to C-terminus: Probable septum site-determining protein MinC (242 aa).

This sequence belongs to the MinC family. Interacts with MinD and FtsZ.

In terms of biological role, cell division inhibitor that blocks the formation of polar Z ring septums. Rapidly oscillates between the poles of the cell to destabilize FtsZ filaments that have formed before they mature into polar Z rings. Prevents FtsZ polymerization. This chain is Probable septum site-determining protein MinC, found in Agrobacterium fabrum (strain C58 / ATCC 33970) (Agrobacterium tumefaciens (strain C58)).